The primary structure comprises 348 residues: Trace amine-associated receptor 9 (348 aa).

The Extracellular portion of the chain corresponds to 1 to 33 (MVNNFSQAEAVELCYKNVNESCIKTPYSPGPRS). Asn-4 and Asn-19 each carry an N-linked (GlcNAc...) asparagine glycan. Intrachain disulfides connect Cys-22–Cys-186 and Cys-105–Cys-190. Residues 34–58 (ILYAVLGFGAVLAAFGNLLVMIAIL) form a helical membrane-spanning segment. Topologically, residues 59–68 (HFKQLHTPTN) are cytoplasmic. Residues 69–90 (FLIASLACADFLVGVTVMPFST) form a helical membrane-spanning segment. Topologically, residues 91–105 (VRSVESCWYFGDSYC) are extracellular. The chain crosses the membrane as a helical span at residues 106–128 (KFHTCFDTSFCFASLFHLCCISV). Spermidine is bound by residues Asp-112 and Thr-113. Residues 129-148 (DRYIAVTDPLTYPTKFTVSV) lie on the Cytoplasmic side of the membrane. A helical transmembrane segment spans residues 149-170 (SGICIVLSWFFSVTYSFSIFYT). The Extracellular portion of the chain corresponds to 171–196 (GANEEGIEELVVALTCVGGCQAPLNQ). The interval 174-187 (EEGIEELVVALTCV) is extracellular Loop 2 (ECL2). The chain crosses the membrane as a helical span at residues 197–218 (NWVLLCFLLFFIPNVAMVFIYS). Residues 219 to 256 (KIFLVAKHQARKIESTASQAQSSSESYKERVAKRERKA) are Cytoplasmic-facing. A helical transmembrane segment spans residues 257 to 280 (AKTLGIAMAAFLVSWLPYLVDAVI). The Extracellular segment spans residues 281-293 (DAYMNFITPPYVY). Residues 294–314 (EILVWCVYYNSAMNPLIYAFF) form a helical membrane-spanning segment. Over 315 to 348 (YQWFGKAIKLIVSGKVLRTDSSTTNLFSEEVETD) the chain is Cytoplasmic.

It belongs to the G-protein coupled receptor 1 family.

It is found in the cell membrane. Olfactory receptor specific for trace amines, such as N,N-dimethylcyclohexylamine (DMCHA) and beta-phenylethylamine (beta-PEA). In contrast to mouse and rat orthologs, not activated by triethylamine, cadaverine (CAD) or spermidine. Trace amine compounds are enriched in animal body fluids and act on trace amine-associated receptors (TAARs) to elicit both intraspecific and interspecific innate behaviors. Trace amine-binding causes a conformation change that triggers signaling via G(s)-class of G alpha proteins (GNAL or GNAS). In mature olfactory sensory neurons, TAAR9 is coupled with GNAL/G(olf)G alpha protein and mediates activation of adenylate cyclase activity to activate cAMP signaling and eventually transmit odorant signals to achieve membrane depolarization. In immature olfactory sensory neurons, TAAR9 is coupled with GNAS/G(s) G alpha proteins. In Homo sapiens (Human), this protein is Trace amine-associated receptor 9.